Here is a 480-residue protein sequence, read N- to C-terminus: Carboxy-terminal processing protease CtpB (480 aa).

The signal sequence occupies residues 1 to 23; it reads MNQKIMAVIAAGSMLFGGAGVYA. Residues 92–182 form the PDZ domain; it reads SVYMDKQTAK…SSVSMKIQRP (91 aa). The peptide binding stretch occupies residues 113 to 116; it reads GIGA. Serine 309 acts as the Nucleophile in catalysis. Residues lysine 334 and glutamine 338 each act as charge relay system in the active site.

Belongs to the peptidase S41A family. In terms of assembly, homodimer. In terms of processing, is cleaved by SpoIVB in vitro and in vivo but this cleavage does not appear to be necessary for CtpB activation. CtpB can also cleave itself in vivo.

The protein resides in the forespore intermembrane space. The enzyme catalyses The enzyme shows specific recognition of a C-terminal tripeptide, Xaa-Yaa-Zaa, in which Xaa is preferably Ala or Leu, Yaa is preferably Ala or Tyr, and Zaa is preferably Ala, but then cleaves at a variable distance from the C-terminus. A typical cleavage is -Ala-Ala-|-Arg-Ala-Ala-Lys-Glu-Asn-Tyr-Ala-Leu-Ala-Ala.. Activated by peptide binding to the PDZ domain. Involved in the signal transduction pathway leading to the proteolytic activation of the mother cell transcription factor pro-sigma-K during sporulation. The signaling serine protease CtpB triggers pro-sigma-K processing by cleaving the pre-processed regulatory protein SpoIVFA and is necessary for the proper timing of sigma-K activation. This chain is Carboxy-terminal processing protease CtpB (ctpB), found in Bacillus subtilis (strain 168).